Consider the following 433-residue polypeptide: Gamma-glutamyl phosphate reductase (433 aa).

It belongs to the gamma-glutamyl phosphate reductase family.

The protein resides in the cytoplasm. The catalysed reaction is L-glutamate 5-semialdehyde + phosphate + NADP(+) = L-glutamyl 5-phosphate + NADPH + H(+). It functions in the pathway amino-acid biosynthesis; L-proline biosynthesis; L-glutamate 5-semialdehyde from L-glutamate: step 2/2. Catalyzes the NADPH-dependent reduction of L-glutamate 5-phosphate into L-glutamate 5-semialdehyde and phosphate. The product spontaneously undergoes cyclization to form 1-pyrroline-5-carboxylate. In Cyanothece sp. (strain PCC 7425 / ATCC 29141), this protein is Gamma-glutamyl phosphate reductase.